We begin with the raw amino-acid sequence, 538 residues long: Bifunctional purine biosynthesis protein PurH (538 aa).

The MGS-like domain occupies 11 to 158; the sequence is PDLHRVRRAL…KNHAYTGVVT (148 aa).

Belongs to the PurH family.

The enzyme catalyses (6R)-10-formyltetrahydrofolate + 5-amino-1-(5-phospho-beta-D-ribosyl)imidazole-4-carboxamide = 5-formamido-1-(5-phospho-D-ribosyl)imidazole-4-carboxamide + (6S)-5,6,7,8-tetrahydrofolate. It catalyses the reaction IMP + H2O = 5-formamido-1-(5-phospho-D-ribosyl)imidazole-4-carboxamide. Its pathway is purine metabolism; IMP biosynthesis via de novo pathway; 5-formamido-1-(5-phospho-D-ribosyl)imidazole-4-carboxamide from 5-amino-1-(5-phospho-D-ribosyl)imidazole-4-carboxamide (10-formyl THF route): step 1/1. It functions in the pathway purine metabolism; IMP biosynthesis via de novo pathway; IMP from 5-formamido-1-(5-phospho-D-ribosyl)imidazole-4-carboxamide: step 1/1. This Bartonella bacilliformis (strain ATCC 35685 / KC583 / Herrer 020/F12,63) protein is Bifunctional purine biosynthesis protein PurH.